The sequence spans 781 residues: Dual specificity protein kinase zakA (781 aa).

Protein kinase domains follow at residues Trp-9–Ile-317 and Asp-379–Leu-654. ATP-binding positions include Ile-15–Val-23 and Lys-44. Asp-132 acts as the Proton acceptor in catalysis. The tract at residues Glu-168–Asn-209 is disordered. A compositionally biased stretch (low complexity) spans Asn-171–Asn-209. ATP contacts are provided by residues Gly-385 to Val-393 and Lys-406. Asp-507 functions as the Proton acceptor in the catalytic mechanism.

This sequence in the N-terminal section; belongs to the protein kinase superfamily. Ser/Thr protein kinase family. It in the C-terminal section; belongs to the protein kinase superfamily. TKL Tyr protein kinase family. In terms of processing, N-terminal serine/threonine domain is capable of autophosphorylation, in vitro, but to a lower extent than the tyrosine kinase domain. May function as a negative regulator of the tyrosine kinase domain. Post-translationally, C-terminal tyrosine kinase domain is capable of autophosphorylation, in vitro. In terms of tissue distribution, zakA and zak2 are coexpressed in prestalk cell population, zakA is enriched in pstB populations and zak1 in pstA populations. ZakA and zak2 are coexpressed in prespore cells, zakA expression levels are 10 fold higher than zak2.

The catalysed reaction is L-seryl-[protein] + ATP = O-phospho-L-seryl-[protein] + ADP + H(+). The enzyme catalyses L-threonyl-[protein] + ATP = O-phospho-L-threonyl-[protein] + ADP + H(+). It catalyses the reaction L-tyrosyl-[protein] + ATP = O-phospho-L-tyrosyl-[protein] + ADP + H(+). Its function is as follows. Positive regulator of gsk3/gskA activity required for cell pattern formation and a downstream effector of carC. The kinases, gsk3/gskA, zakA and zak2, form part of a signaling pathway that responds to extracellular cyclic AMP. The pathway has a role in transcriptional regulation; required to direct prespore/spore fates during development. ZakA negatively regulates prestalk differentiation by regulating expression of ecmB. Phosphorylates Y-214 of gsk3/gskA, in vitro. In Dictyostelium discoideum (Social amoeba), this protein is Dual specificity protein kinase zakA (zakA).